Reading from the N-terminus, the 210-residue chain is Probable GTP-binding protein EngB (210 aa).

Positions 30 to 204 (QGYEVAFAGR…YKVLAGWMEL (175 aa)) constitute an EngB-type G domain. GTP contacts are provided by residues 38 to 45 (GRSNAGKS), 64 to 68 (GRTQL), 82 to 85 (DLPG), 149 to 152 (TKAD), and 182 to 185 (LFSA). Mg(2+)-binding residues include Ser-45 and Thr-66.

The protein belongs to the TRAFAC class TrmE-Era-EngA-EngB-Septin-like GTPase superfamily. EngB GTPase family. Requires Mg(2+) as cofactor.

Necessary for normal cell division and for the maintenance of normal septation. The protein is Probable GTP-binding protein EngB of Pseudomonas putida (strain W619).